The primary structure comprises 445 residues: Phosphoglucosamine mutase (445 aa).

Ser102 acts as the Phosphoserine intermediate in catalysis. The Mg(2+) site is built by Ser102, Asp241, Asp243, and Asp245. Ser102 bears the Phosphoserine mark.

The protein belongs to the phosphohexose mutase family. Mg(2+) serves as cofactor. Activated by phosphorylation.

The enzyme catalyses alpha-D-glucosamine 1-phosphate = D-glucosamine 6-phosphate. Functionally, catalyzes the conversion of glucosamine-6-phosphate to glucosamine-1-phosphate. In Citrobacter koseri (strain ATCC BAA-895 / CDC 4225-83 / SGSC4696), this protein is Phosphoglucosamine mutase.